Consider the following 1216-residue polypeptide: ATP-dependent helicase/nuclease subunit A (1216 aa).

Residues 26-488 form the UvrD-like helicase ATP-binding domain; sequence QKKTAEQIEA…ILLKENFRSS (463 aa). 47–54 serves as a coordination point for ATP; that stretch reads ASAGSGKT. Positions 515–802 constitute a UvrD-like helicase C-terminal domain; sequence KHQLVFANTK…ELMTIHKSKG (288 aa).

It belongs to the helicase family. AddA subfamily. Heterodimer of AddA and AddB/RexB. It depends on Mg(2+) as a cofactor.

It carries out the reaction Couples ATP hydrolysis with the unwinding of duplex DNA by translocating in the 3'-5' direction.. It catalyses the reaction ATP + H2O = ADP + phosphate + H(+). In terms of biological role, the heterodimer acts as both an ATP-dependent DNA helicase and an ATP-dependent, dual-direction single-stranded exonuclease. Recognizes the chi site generating a DNA molecule suitable for the initiation of homologous recombination. The AddA nuclease domain is required for chi fragment generation; this subunit has the helicase and 3' -&gt; 5' nuclease activities. In Streptococcus pneumoniae (strain Hungary19A-6), this protein is ATP-dependent helicase/nuclease subunit A.